Consider the following 3289-residue polypeptide: tRNA nuclease CdiA (3289 aa).

The N-terminal stretch at 1–32 (MHQPPVRFTYRLLSYLISTIIAGQPLLPAVGA) is a signal peptide. Residues 36–322 (PQNGAGMDKA…AGGNLSVSSR (287 aa)) are two-partner system transport domain (TPS). The tract at residues 351–1398 (EKLTAGRDVT…IVVRTGHLLN (1048 aa)) is FHA-1. The interval 595–615 (AVNASEKLTHSGKSSAPSLSL) is disordered. Residues 1399–1689 (QREGFSATTT…LTGQTGISDD (291 aa)) form a receptor binding domain (RBD) region. The tract at residues 1690 to 1874 (WPLPSGNNGY…LSPEDITLHN (185 aa)) is YP domain. The segment at 1875–1935 (GSVISGNNVQ…DLSAIGDISN (61 aa)) is periplasmic FHA-1 repeat (pFR). The interval 1979 to 2653 (TDTGPVATIK…TSKYDSKQTS (675 aa)) is FHA-2. The segment covering 2097–2113 (RESKNSRNGRSESHESH) has biased composition (basic and acidic residues). Disordered regions lie at residues 2097-2116 (RESK…HAAV), 2332-2356 (GSSK…TIGS), and 2466-2513 (TGDP…TGKN). Polar residues-rich tracts occupy residues 2344–2356 (GTTQ…TIGS) and 2472–2507 (TGVS…NLSV). The pretoxin (PT) domain stretch occupies residues 2992 to 3034 (SDLSEEQKQTISTLATVSAGLAGGLTGNSTASAAVGAQSGKNA). The short motif at 3035–3038 (VENN) is the VENN CT cleavage motif element. The C-terminal effector domain (CT); has tRNase activity stretch occupies residues 3035–3289 (VENNYLSVSE…VGHIQPVKVK (255 aa)). Positions 3039–3197 (YLSVSEKTEL…PLIGQAASNK (159 aa)) are inner membrane translocation domain (IMTD), targets protein to PtsG.

It in the N-terminal section; belongs to the CdiA toxin family. Forms a contact-dependent growth inhibition complex of CdiA-CT-NC101, CdiI-NC101 and EF-Tu; the complex is a dimer of heterotrimers. Stable CdiA-CT-NC101, EF-Tu complexes are not detected, nor are complexes with EF-Ts.

Its subcellular location is the secreted. It localises to the target cell. The protein resides in the target cell cytoplasm. In terms of biological role, toxic component of a toxin-immunity protein module, which functions as a cellular contact-dependent growth inhibition (CDI) system. CDI modules allow bacteria to communicate with and inhibit the growth of closely related neighboring bacteria in a contact-dependent fashion (target cell counts decrease about 10,0000-fold for this system). CdiA toxicity is neutralized by its cognate immunity protein CdiI-NC101, but not by CdiI from other bacteria. The C-terminal domain (CT) cleaves tRNA endonucleolytically at the 5' side of guanine discriminator nucleotide sites (removes the last 4 nucleotides of the tRNA acceptor arm when the first nucleotide to be removed is G). Requires EF-Ts (tsf) for toxic function of the CT domain in vivo. In vitro the CT tRNase activity requires both EF-Tu (tufA) and EF-Ts. EF-Ts probably increases steady-state GTP-EF-Tu-aa-tRNA substrate levels. The CT domain is thought to remodel this same complex to displace the 3'-end of the aa-tRNA and allow it to enter into the toxin active site. The CT domain gains access to the cytoplasm of target cells by using integral inner membrane protein PTS system glucose-specific EIICB component (ptsG). Its function is as follows. The CdiA protein is thought to be exported from the cell through the central lumen of CdiB, the other half of its two-partner system (TPS). The TPS domain probably remains associated with CdiB while the FHA-1 domain forms an extended filament with the receptor-binding domain (RBD) at its extremity; in the secretion arrested state the C-terminus of the RBD and YP domains form a hairpin-like structure as the FHA-2, PT and CT domains are periplasmic. The YP domain is probably responsible for this arrest at the point where it re-enters the host cell periplasm. Upon binding to a target cell outer membrane receptor a signal is transmitted to activate secretion. The filament elongates slightly, the rest of CdiA is secreted and the FHA-2 domain becomes stably associated with the target cell's outer membrane where it facilitates entry of the toxic CT domain into the target cell periplasm. From there the toxic CT domain is cleaved and gains access to the target cell cytoplasm via an inner membrane protein (PtsG for this CDI). The sequence is that of tRNA nuclease CdiA from Escherichia coli (strain NC101).